The primary structure comprises 406 residues: Eukaryotic initiation factor 4A-I (406 aa).

The disordered stretch occupies residues 1-21 (MSASQDSRSRDNGPDGMEPEG). Ser2 is modified (N-acetylserine). A Phosphoserine modification is found at Ser4. Positions 32-60 (DSFDDMNLSESLLRGIYAYGFEKPSAIQQ) match the Q motif motif. One can recognise a Helicase ATP-binding domain in the interval 63–234 (ILPCIKGYDV…KKFMRDPIRI (172 aa)). 76–83 (AQSGTGKT) provides a ligand contact to ATP. Lys118 is subject to N6-acetyllysine. Lys146 participates in a covalent cross-link: Glycyl lysine isopeptide (Lys-Gly) (interchain with G-Cter in SUMO2). Position 158 is a phosphothreonine (Thr158). Residue Lys174 is modified to N6-acetyllysine. The short motif at 182–185 (DEAD) is the DEAD box element. Lys193 bears the N6-acetyllysine mark. Residue Lys225 forms a Glycyl lysine isopeptide (Lys-Gly) (interchain with G-Cter in SUMO2) linkage. Lys238 is modified (N6-acetyllysine; alternate). Residue Lys238 forms a Glycyl lysine isopeptide (Lys-Gly) (interchain with G-Cter in SUMO2); alternate linkage. The region spanning 245-406 (GIRQFYINVE…EMPLNVADLI (162 aa)) is the Helicase C-terminal domain. Glycyl lysine isopeptide (Lys-Gly) (interchain with G-Cter in SUMO2) cross-links involve residues Lys309, Lys369, and Lys381.

This sequence belongs to the DEAD box helicase family. eIF4A subfamily. EIF4F is a multi-subunit complex, the composition of which varies with external and internal environmental conditions. It is composed of at least EIF4A, EIF4E and EIF4G1/EIF4G3. Interacts with PAIP1, EIF4E and UPF2. Found in a complex with XPO7, EIF4A1, ARHGAP1, VPS26A, VPS29, VPS35 and SFN. May interact with NOM1. Interacts with PDCD4; this interferes with the interaction between EIF4A and EIF4G. Interacts with RBM4. Interacts with DDX3X in an RNA-independent manner. Interacts with PKP1 (via N-terminus); the interaction promotes EIF4A1 recruitment to the cap-dependent translation complex and EIF4A1 ATPase activity.

The protein resides in the cytoplasm. It localises to the perinuclear region. It is found in the cell membrane. Its subcellular location is the stress granule. The catalysed reaction is ATP + H2O = ADP + phosphate + H(+). Functionally, ATP-dependent RNA helicase which is a subunit of the eIF4F complex involved in cap recognition and is required for mRNA binding to ribosome. In the current model of translation initiation, eIF4A unwinds RNA secondary structures in the 5'-UTR of mRNAs which is necessary to allow efficient binding of the small ribosomal subunit, and subsequent scanning for the initiator codon. As a result, promotes cell proliferation and growth. The protein is Eukaryotic initiation factor 4A-I (EIF4A1) of Bos taurus (Bovine).